The primary structure comprises 484 residues: F-box/LRR-repeat protein At3g59210 (484 aa).

Residues 6-54 enclose the F-box domain; that stretch reads KDIINCLPDNLLCQILSNLSTKEAALTSLLSKRWRYLFALVPNLDFDVL. LRR repeat units follow at residues 144 to 170, 172 to 197, 205 to 234, 303 to 334, and 335 to 360; these read KIGP…NLDS, VFEE…SLLN, SCSV…SFDT, TLYL…TIES, and HPEL…VFQG.

This chain is F-box/LRR-repeat protein At3g59210, found in Arabidopsis thaliana (Mouse-ear cress).